The chain runs to 391 residues: MSTNRRRLVILVADSAGCGALPDAAAYGDEGSDTLGNTSRAVGGLSLPVLGRMGLGHVTAIQGVPPDPAPTAFHGRMAERSEGKDTTTGHWEMMGVVLREGLRTFPRGFPPEILEAFVRETGAPGVLGNTVASGTVIIQELGEEHQRTGKPIVYTSADSVFQVAAHTDTVPLETLYAWCRTARRILDPWRVARVIARPFVGTPGSYARTYDRKDFSMPPPAPTVLERLVEAGVPVVGVGKIPDIFDRRGITEEIHTAGNADGLARTAALLDRVDRGLVFVNLVDFDMLYGHRNDPAGYARALEELDRGLPAILDRLGPGELLALTADHGCDPTTPSTDHSREHVPLIVHAPGRGGGDLGTRATFADLGATVAEYFGVRSEVGTSFLAEVTR.

Asp14 is a binding site for Mn(2+). Residues Ile61–Thr88 form a disordered region. Residues Arg76 to Thr87 are compositionally biased toward basic and acidic residues. Mn(2+)-binding residues include Asp286, His291, Asp327, His328, and His339.

Belongs to the phosphopentomutase family. Requires Mn(2+) as cofactor.

The protein localises to the cytoplasm. It carries out the reaction 2-deoxy-alpha-D-ribose 1-phosphate = 2-deoxy-D-ribose 5-phosphate. It catalyses the reaction alpha-D-ribose 1-phosphate = D-ribose 5-phosphate. It functions in the pathway carbohydrate degradation; 2-deoxy-D-ribose 1-phosphate degradation; D-glyceraldehyde 3-phosphate and acetaldehyde from 2-deoxy-alpha-D-ribose 1-phosphate: step 1/2. Functionally, isomerase that catalyzes the conversion of deoxy-ribose 1-phosphate (dRib-1-P) and ribose 1-phosphate (Rib-1-P) to deoxy-ribose 5-phosphate (dRib-5-P) and ribose 5-phosphate (Rib-5-P), respectively. This Anaeromyxobacter dehalogenans (strain 2CP-C) protein is Phosphopentomutase.